A 202-amino-acid polypeptide reads, in one-letter code: Coiled-coil domain-containing protein mdt-28 (202 aa).

Composition is skewed to acidic residues over residues Met1–Glu15 and Glu28–Tyr45. The disordered stretch occupies residues Met1–Pro83. Residues Ile159–Ser184 are a coiled coil.

Interacts with mdt-6 and mdt-30. As to expression, ubiquitously expressed in tissues including epidermal, intestinal, pharyngeal and uterine, and is also expressed in vulval muscle cells and gut granules.

Its subcellular location is the nucleus. The protein resides in the cytoplasm. Its function is as follows. Plays a role in normal growth and development. This chain is Coiled-coil domain-containing protein mdt-28, found in Caenorhabditis elegans.